A 94-amino-acid chain; its full sequence is Large ribosomal subunit protein bL25 (94 aa).

The protein belongs to the bacterial ribosomal protein bL25 family. Part of the 50S ribosomal subunit; part of the 5S rRNA/L5/L18/L25 subcomplex. Contacts the 5S rRNA. Binds to the 5S rRNA independently of L5 and L18.

Its function is as follows. This is one of the proteins that binds to the 5S RNA in the ribosome where it forms part of the central protuberance. The chain is Large ribosomal subunit protein bL25 from Sodalis glossinidius (strain morsitans).